Reading from the N-terminus, the 190-residue chain is Holliday junction branch migration complex subunit RuvA (190 aa).

A domain I region spans residues Met1–Gly64. The domain II stretch occupies residues Thr65–Gly137. The segment at Gly137–His141 is flexible linker. The tract at residues Ala142 to Arg190 is domain III.

This sequence belongs to the RuvA family. Homotetramer. Forms an RuvA(8)-RuvB(12)-Holliday junction (HJ) complex. HJ DNA is sandwiched between 2 RuvA tetramers; dsDNA enters through RuvA and exits via RuvB. An RuvB hexamer assembles on each DNA strand where it exits the tetramer. Each RuvB hexamer is contacted by two RuvA subunits (via domain III) on 2 adjacent RuvB subunits; this complex drives branch migration. In the full resolvosome a probable DNA-RuvA(4)-RuvB(12)-RuvC(2) complex forms which resolves the HJ.

The protein resides in the cytoplasm. Functionally, the RuvA-RuvB-RuvC complex processes Holliday junction (HJ) DNA during genetic recombination and DNA repair, while the RuvA-RuvB complex plays an important role in the rescue of blocked DNA replication forks via replication fork reversal (RFR). RuvA specifically binds to HJ cruciform DNA, conferring on it an open structure. The RuvB hexamer acts as an ATP-dependent pump, pulling dsDNA into and through the RuvAB complex. HJ branch migration allows RuvC to scan DNA until it finds its consensus sequence, where it cleaves and resolves the cruciform DNA. This is Holliday junction branch migration complex subunit RuvA from Bordetella avium (strain 197N).